The sequence spans 395 residues: Obg-like ATPase 1 (395 aa).

In terms of domain architecture, OBG-type G spans 22–280; it reads LKVGILGLPN…MPEDERQKYL (259 aa). 31 to 36 serves as a coordination point for ATP; sequence NVGKST. Residues Ser-35 and Thr-55 each coordinate Mg(2+). Position 228 (Leu-228) interacts with ATP. Residues 301 to 384 enclose the TGS domain; the sequence is QLEYFFTSGE…QDGDVIFFKF (84 aa).

The protein belongs to the TRAFAC class OBG-HflX-like GTPase superfamily. OBG GTPase family. YchF/OLA1 subfamily. As to quaternary structure, monomer. It depends on Mg(2+) as a cofactor. In terms of tissue distribution, expressed in the nervous system, pharyngeal muscles and intestine (at protein level).

It localises to the cytoplasm. Functionally, hydrolyzes ATP, and can also hydrolyze GTP with lower efficiency. Has lower affinity for GTP. Plays a role in regulating starvation-induced thermotaxis responses in AFD thermosensory neurons. This chain is Obg-like ATPase 1, found in Caenorhabditis elegans.